The chain runs to 274 residues: Large ribosomal subunit protein uL2 (274 aa).

Disordered stretches follow at residues serine 40–lysine 59 and valine 223–arginine 274. Basic residues-rich tracts occupy residues valine 49–lysine 59 and tyrosine 256–arginine 274.

Belongs to the universal ribosomal protein uL2 family. In terms of assembly, part of the 50S ribosomal subunit. Forms a bridge to the 30S subunit in the 70S ribosome.

Functionally, one of the primary rRNA binding proteins. Required for association of the 30S and 50S subunits to form the 70S ribosome, for tRNA binding and peptide bond formation. It has been suggested to have peptidyltransferase activity; this is somewhat controversial. Makes several contacts with the 16S rRNA in the 70S ribosome. This Acidithiobacillus ferrooxidans (strain ATCC 23270 / DSM 14882 / CIP 104768 / NCIMB 8455) (Ferrobacillus ferrooxidans (strain ATCC 23270)) protein is Large ribosomal subunit protein uL2.